A 208-amino-acid chain; its full sequence is Uracil phosphoribosyltransferase (208 aa).

5-phospho-alpha-D-ribose 1-diphosphate contacts are provided by residues R78, R103, and D130–S138. Uracil-binding positions include I193 and G198–A200. Residue D199 participates in 5-phospho-alpha-D-ribose 1-diphosphate binding.

It belongs to the UPRTase family. Requires Mg(2+) as cofactor.

It catalyses the reaction UMP + diphosphate = 5-phospho-alpha-D-ribose 1-diphosphate + uracil. It participates in pyrimidine metabolism; UMP biosynthesis via salvage pathway; UMP from uracil: step 1/1. Its activity is regulated as follows. Allosterically activated by GTP. Catalyzes the conversion of uracil and 5-phospho-alpha-D-ribose 1-diphosphate (PRPP) to UMP and diphosphate. The sequence is that of Uracil phosphoribosyltransferase from Photobacterium profundum (strain SS9).